The chain runs to 432 residues: Trigger factor (432 aa).

A PPIase FKBP-type domain is found at 161–246 (GTRATINFVG…VVKVESRELP (86 aa)).

This sequence belongs to the FKBP-type PPIase family. Tig subfamily.

The protein localises to the cytoplasm. It carries out the reaction [protein]-peptidylproline (omega=180) = [protein]-peptidylproline (omega=0). Functionally, involved in protein export. Acts as a chaperone by maintaining the newly synthesized protein in an open conformation. Functions as a peptidyl-prolyl cis-trans isomerase. This chain is Trigger factor, found in Aliivibrio fischeri (strain ATCC 700601 / ES114) (Vibrio fischeri).